Consider the following 289-residue polypeptide: Probable endonuclease 4 (289 aa).

Zn(2+)-binding residues include H74, H115, E150, D184, H187, H218, D231, H233, and E263.

The protein belongs to the AP endonuclease 2 family. It depends on Zn(2+) as a cofactor.

It carries out the reaction Endonucleolytic cleavage to 5'-phosphooligonucleotide end-products.. In terms of biological role, endonuclease IV plays a role in DNA repair. It cleaves phosphodiester bonds at apurinic or apyrimidinic (AP) sites, generating a 3'-hydroxyl group and a 5'-terminal sugar phosphate. The protein is Probable endonuclease 4 of Mycoplasma capricolum subsp. capricolum (strain California kid / ATCC 27343 / NCTC 10154).